Reading from the N-terminus, the 172-residue chain is Protein LHCP TRANSLOCATION DEFECT (172 aa).

A chloroplast-targeting transit peptide spans 1 to 28 (MASIPCTFQLSARASSASAAAAARRSPR). The stretch at 114-146 (PVDILLMLAASEGDKPKLEELLRAGAKYDVKDV) is one ANK repeat.

The protein localises to the plastid. It localises to the chloroplast. Involved in the import of light-harvesting complex proteins (LHCP) and subsequent routing of these proteins to the chloroplast signal recognition particle (SRP) pathway. The protein is Protein LHCP TRANSLOCATION DEFECT (LTD) of Oryza sativa subsp. indica (Rice).